Reading from the N-terminus, the 228-residue chain is Histone H1-III (228 aa).

Over residues 1 to 18 (MSDPAPEVASAVPVASPA) the composition is skewed to low complexity. Disordered stretches follow at residues 1 to 44 (MSDP…PPVS) and 98 to 228 (LQTK…AKKA). The H15 domain maps to 39-113 (THPPVSEMVV…GASGSFKLPA (75 aa)). Basic and acidic residues predominate over residues 115-133 (AKKEKVAKTPKKAAGEKKP). Basic residues-rich tracts occupy residues 148–170 (SIAK…KSTK) and 178–209 (AAKK…KVAA). Basic and acidic residues predominate over residues 211–221 (KPAEKKPEAAK).

The protein belongs to the histone H1/H5 family.

The protein localises to the nucleus. Its subcellular location is the chromosome. Functionally, histones H1 are necessary for the condensation of nucleosome chains into higher-order structures. The polypeptide is Histone H1-III (Glyptotendipes barbipes (Midge)).